The chain runs to 407 residues: Ameloblastin (407 aa).

The N-terminal stretch at 1–26 (MSASKIPLFKMKGLILFLSLVKMSLA) is a signal peptide. At Pro-42 the chain carries Hydroxyproline. The residue at position 48 (Ser-48) is a Phosphoserine. Disordered regions lie at residues 124 to 143 (GVQVTPQKPGPQPPMHPGQL) and 259 to 304 (QNSP…ENPA).

Belongs to the ameloblastin family. As to expression, ameloblast-specific.

It localises to the secreted. The protein resides in the extracellular space. The protein localises to the extracellular matrix. In terms of biological role, involved in the mineralization and structural organization of enamel. The chain is Ameloblastin (Ambn) from Mus musculus (Mouse).